We begin with the raw amino-acid sequence, 242 residues long: MEGWQRAFVLHSRPWSETSLMLDVFTEESGRVRLVAKGARSKRSTLKGALQPFTPLLLRFGGRGEVKTLRSAEAVSLALPLSGITLYSGLYINELLSRVLEYETRFSELFFDYLHCIQSLAGATGTPEPALRRFELALLGHLGYGVNFTHCAGSGEPVDDTMTYRYREEKGFIASVVIDNKTFTGRQLKALNAREFPDADTLRAAKRFTRMALKPYLGGKPLKSRELFRQFMPKRTVKTHYE.

This sequence belongs to the RecO family. Monomer.

Functionally, involved in DNA repair and RecF pathway recombination. This Shigella sonnei (strain Ss046) protein is DNA repair protein RecO.